The following is a 325-amino-acid chain: Brain mitochondrial carrier protein 1 (325 aa).

6 helical membrane-spanning segments follow: residues 38 to 54, 112 to 128, 145 to 165, 199 to 215, 240 to 256, and 298 to 315; these read GLNW…SIVA, LRQA…YQSL, MICG…TDVL, GVVP…GVEL, VSSF…SNPV, and GFWP…IFFI. 3 Solcar repeats span residues 42 to 131, 139 to 224, and 233 to 323; these read KPFV…LKRL, ETLL…TKKH, and DTIL…LKRL.

The protein belongs to the mitochondrial carrier (TC 2.A.29) family. In terms of assembly, homotetramer. Mainly expressed in brain, particularly abundant in cortex, hippocampus thalamus, amygdala and hypothalamus. Highly expressed in heart and kidney, but not liver or lung (at protein level). In the nervous system, expressed in cortex, basal ganglia, substantia nigra, cerebellum, and spinal cord (at protein level).

It is found in the mitochondrion inner membrane. It catalyses the reaction sulfite(in) + sulfate(out) = sulfite(out) + sulfate(in). It carries out the reaction thiosulfate(in) + sulfate(out) = thiosulfate(out) + sulfate(in). The enzyme catalyses sulfate(out) + phosphate(in) = sulfate(in) + phosphate(out). The catalysed reaction is oxalate(in) + sulfate(out) = oxalate(out) + sulfate(in). It catalyses the reaction malonate(in) + sulfate(out) = malonate(out) + sulfate(in). It carries out the reaction maleate(in) + sulfate(out) = maleate(out) + sulfate(in). The enzyme catalyses (S)-malate(in) + sulfate(out) = (S)-malate(out) + sulfate(in). The catalysed reaction is (3S)-citramalate(in) + sulfate(out) = (3S)-citramalate(out) + sulfate(in). It catalyses the reaction (3R)-citramalate(in) + sulfate(out) = (3R)-citramalate(out) + sulfate(in). It carries out the reaction sulfate(out) + succinate(in) = sulfate(in) + succinate(out). The enzyme catalyses (S,S)-tartrate(in) + sulfate(out) = (S,S)-tartrate(out) + sulfate(in). The catalysed reaction is (2R,3R)-tartrate(in) + sulfate(out) = (2R,3R)-tartrate(out) + sulfate(in). It catalyses the reaction D-aspartate(in) + sulfate(out) = D-aspartate(out) + sulfate(in). It carries out the reaction L-aspartate(in) + sulfate(out) = L-aspartate(out) + sulfate(in). The enzyme catalyses sulfate(in) = sulfate(out). The catalysed reaction is phosphate(in) = phosphate(out). It catalyses the reaction (S)-malate(out) = (S)-malate(in). It carries out the reaction citrate(in) = citrate(out). The enzyme catalyses L-aspartate(out) = L-aspartate(in). The catalysed reaction is L-glutamate(out) = L-glutamate(in). It catalyses the reaction H(+)(in) = H(+)(out). It carries out the reaction chloride(in) = chloride(out). Functionally, transports inorganic anions (sulfate, sulfite, thiosulfate and phosphate) and, to a lesser extent, a variety of dicarboxylates (e.g. malonate, malate and citramalate) and, even more so, aspartate and glutamate and tricarboxylates. May catalyze the export of sulfite and thiosulfate (the hydrogen sulfide degradation products) from the mitochondria, thereby modulating the level of the hydrogen sulfide. Also can mediate a very low unidirectional transport of anions including sulfate, phosphate, (S)-malate, citrate, L-aspartate and L-glutamate. Maintains oxidative balance (through uncoupling activities) and ATP production (by modifying mitochondrial membrane potential). Is able to transport protons across lipid membranes. Also exhibits transmembrane chloride transport activity to a lesser extent. May modify mitochondrial respiratory efficiency and mitochondrial oxidant production. The sequence is that of Brain mitochondrial carrier protein 1 from Mus musculus (Mouse).